A 270-amino-acid chain; its full sequence is Tryptophan synthase alpha chain (270 aa).

Residues E57 and D68 each act as proton acceptor in the active site.

Belongs to the TrpA family. As to quaternary structure, tetramer of two alpha and two beta chains.

The enzyme catalyses (1S,2R)-1-C-(indol-3-yl)glycerol 3-phosphate + L-serine = D-glyceraldehyde 3-phosphate + L-tryptophan + H2O. It functions in the pathway amino-acid biosynthesis; L-tryptophan biosynthesis; L-tryptophan from chorismate: step 5/5. In terms of biological role, the alpha subunit is responsible for the aldol cleavage of indoleglycerol phosphate to indole and glyceraldehyde 3-phosphate. In Mycobacterium bovis (strain ATCC BAA-935 / AF2122/97), this protein is Tryptophan synthase alpha chain.